Here is a 467-residue protein sequence, read N- to C-terminus: Uronate isomerase (467 aa).

It belongs to the metallo-dependent hydrolases superfamily. Uronate isomerase family.

It carries out the reaction D-glucuronate = D-fructuronate. The catalysed reaction is aldehydo-D-galacturonate = keto-D-tagaturonate. The protein operates within carbohydrate metabolism; pentose and glucuronate interconversion. The chain is Uronate isomerase from Solibacter usitatus (strain Ellin6076).